A 469-amino-acid chain; its full sequence is 3-isopropylmalate dehydratase large subunit (469 aa).

[4Fe-4S] cluster contacts are provided by Cys350, Cys410, and Cys413.

This sequence belongs to the aconitase/IPM isomerase family. LeuC type 1 subfamily. Heterodimer of LeuC and LeuD. The cofactor is [4Fe-4S] cluster.

It catalyses the reaction (2R,3S)-3-isopropylmalate = (2S)-2-isopropylmalate. The protein operates within amino-acid biosynthesis; L-leucine biosynthesis; L-leucine from 3-methyl-2-oxobutanoate: step 2/4. Catalyzes the isomerization between 2-isopropylmalate and 3-isopropylmalate, via the formation of 2-isopropylmaleate. In Rhizobium leguminosarum bv. trifolii (strain WSM2304), this protein is 3-isopropylmalate dehydratase large subunit.